Here is a 244-residue protein sequence, read N- to C-terminus: HTH-type transcriptional regulator RdgA (244 aa).

An HTH cro/C1-type domain is found at 9–62 (LKTARTAQGLSQKALGDMIGVSQAAIQKIEVGKASQTTKIVELSNNLRVRPEWL). Positions 20–39 (QKALGDMIGVSQAAIQKIEV) form a DNA-binding region, H-T-H motif.

Regulates pectin lyase production in response to DNA damage. This Pectobacterium carotovorum subsp. carotovorum (Erwinia carotovora subsp. carotovora) protein is HTH-type transcriptional regulator RdgA (rdgA).